A 434-amino-acid chain; its full sequence is Septin-7 (434 aa).

Residue Tyr-27 is modified to Phosphotyrosine. Positions 44-313 (RGFEFTLMVV…ENYRSRKLAA (270 aa)) constitute a Septin-type G domain. The segment at 44–314 (RGFEFTLMVV…NYRSRKLAAV (271 aa)) is interaction with SEPTIN12. The segment at 54–61 (GESGLGKS) is G1 motif. 54–61 (GESGLGKS) provides a ligand contact to GTP. Ser-74 carries the phosphoserine modification. Residues Thr-87, Gly-113, and 192–200 (KADTLTPEE) each bind GTP. A G3 motif region spans residues 110-113 (DTPG). The G4 motif stretch occupies residues 191–194 (AKAD). The residue at position 225 (Thr-225) is a Phosphothreonine. Residues Gly-247 and Arg-262 each coordinate GTP. The stretch at 329 to 434 (TKSPLAQMEE…EKNKKKGKIF (106 aa)) forms a coiled coil. Position 331 is a phosphoserine (Ser-331). Lys-370 carries the N6-acetyllysine modification. The span at 377 to 407 (QRRHEQMKKNLEAQHKGLEEKRRQFEDEKAN) shows a compositional bias: basic and acidic residues. Positions 377–434 (QRRHEQMKKNLEAQHKGLEEKRRQFEDEKANWEAQQRILEQQNSSRTLEKNKKKGKIF) are disordered. Ser-421 is subject to Phosphoserine. Position 423 is a phosphothreonine (Thr-423).

It belongs to the TRAFAC class TrmE-Era-EngA-EngB-Septin-like GTPase superfamily. Septin GTPase family. As to quaternary structure, septins polymerize into heterooligomeric protein complexes that form filaments, and associate with cellular membranes, actin filaments and microtubules. GTPase activity is required for filament formation. Filaments are assembled from asymmetrical heterotrimers, composed of SEPTIN2, SEPTIN6 and SEPTIN7 that associate head-to-head to form a hexameric unit. Within the trimer, directly interacts with SEPTIN6, while interaction with SEPTIN2 seems indirect. In the absence of SEPTIN6, forms homodimers. Interacts directly with CENPE and links CENPE to septin filaments composed of SEPTIN2, SEPTIN6 and SEPTIN7. Interacts with SEPTIN5, SEPTIN8, SEPTIN9 and SEPTIN11. Component of a septin core octameric complex consisting of SEPTIN12, SEPTIN7, SEPTIN6 and SEPTIN2 or SEPTIN4 in the order 12-7-6-2-2-6-7-12 or 12-7-6-4-4-6-7-12 and located in the sperm annulus; the SEPTIN12:SEPTIN7 association is mediated by the respective GTP-binding domains.

The protein localises to the cytoplasm. The protein resides in the chromosome. It localises to the centromere. Its subcellular location is the kinetochore. It is found in the cytoskeleton. The protein localises to the spindle. The protein resides in the cleavage furrow. It localises to the midbody. Its subcellular location is the cilium axoneme. It is found in the cell projection. The protein localises to the cilium. The protein resides in the flagellum. In terms of biological role, filament-forming cytoskeletal GTPase. Required for normal organization of the actin cytoskeleton. Required for normal progress through mitosis. Involved in cytokinesis. Required for normal association of CENPE with the kinetochore. Plays a role in ciliogenesis and collective cell movements. Forms a filamentous structure with SEPTIN12, SEPTIN6, SEPTIN2 and probably SEPTIN4 at the sperm annulus which is required for the structural integrity and motility of the sperm tail during postmeiotic differentiation. The sequence is that of Septin-7 from Pan troglodytes (Chimpanzee).